Consider the following 279-residue polypeptide: Energy-coupling factor transporter ATP-binding protein EcfA1 (279 aa).

An ABC transporter domain is found at 5–240 (IELNNIQFNY…GEALVEMGLD (236 aa)). 40 to 47 (GHNGSGKS) is an ATP binding site.

Belongs to the ABC transporter superfamily. Energy-coupling factor EcfA family. As to quaternary structure, forms a stable energy-coupling factor (ECF) transporter complex composed of 2 membrane-embedded substrate-binding proteins (S component), 2 ATP-binding proteins (A component) and 2 transmembrane proteins (T component).

Its subcellular location is the cell membrane. Functionally, ATP-binding (A) component of a common energy-coupling factor (ECF) ABC-transporter complex. Unlike classic ABC transporters this ECF transporter provides the energy necessary to transport a number of different substrates. The chain is Energy-coupling factor transporter ATP-binding protein EcfA1 from Enterococcus faecalis (strain ATCC 700802 / V583).